Here is a 446-residue protein sequence, read N- to C-terminus: Thymidine phosphorylase (446 aa).

Belongs to the thymidine/pyrimidine-nucleoside phosphorylase family. As to quaternary structure, homodimer.

The enzyme catalyses thymidine + phosphate = 2-deoxy-alpha-D-ribose 1-phosphate + thymine. It participates in pyrimidine metabolism; dTMP biosynthesis via salvage pathway; dTMP from thymine: step 1/2. In terms of biological role, the enzymes which catalyze the reversible phosphorolysis of pyrimidine nucleosides are involved in the degradation of these compounds and in their utilization as carbon and energy sources, or in the rescue of pyrimidine bases for nucleotide synthesis. The chain is Thymidine phosphorylase from Psychromonas ingrahamii (strain DSM 17664 / CCUG 51855 / 37).